The following is a 350-amino-acid chain: Ribosomal RNA large subunit methyltransferase M (350 aa).

Residues Ser184, 217–220 (APGG), Asp236, Asp256, and Asp272 each bind S-adenosyl-L-methionine. The Proton acceptor role is filled by Lys301.

It belongs to the class I-like SAM-binding methyltransferase superfamily. RNA methyltransferase RlmE family. RlmM subfamily. Monomer.

Its subcellular location is the cytoplasm. It carries out the reaction cytidine(2498) in 23S rRNA + S-adenosyl-L-methionine = 2'-O-methylcytidine(2498) in 23S rRNA + S-adenosyl-L-homocysteine + H(+). Catalyzes the 2'-O-methylation at nucleotide C2498 in 23S rRNA. In Marinomonas sp. (strain MWYL1), this protein is Ribosomal RNA large subunit methyltransferase M.